We begin with the raw amino-acid sequence, 230 residues long: 5'-methylthioadenosine/S-adenosylhomocysteine nucleosidase (230 aa).

Residue glutamate 12 is the Proton acceptor of the active site. Substrate contacts are provided by residues glycine 78, isoleucine 153, and 174 to 175 (ME). Aspartate 198 acts as the Proton donor in catalysis.

It belongs to the PNP/UDP phosphorylase family. MtnN subfamily.

It carries out the reaction S-adenosyl-L-homocysteine + H2O = S-(5-deoxy-D-ribos-5-yl)-L-homocysteine + adenine. It catalyses the reaction S-methyl-5'-thioadenosine + H2O = 5-(methylsulfanyl)-D-ribose + adenine. The enzyme catalyses 5'-deoxyadenosine + H2O = 5-deoxy-D-ribose + adenine. The protein operates within amino-acid biosynthesis; L-methionine biosynthesis via salvage pathway; S-methyl-5-thio-alpha-D-ribose 1-phosphate from S-methyl-5'-thioadenosine (hydrolase route): step 1/2. Functionally, catalyzes the irreversible cleavage of the glycosidic bond in both 5'-methylthioadenosine (MTA) and S-adenosylhomocysteine (SAH/AdoHcy) to adenine and the corresponding thioribose, 5'-methylthioribose and S-ribosylhomocysteine, respectively. Also cleaves 5'-deoxyadenosine, a toxic by-product of radical S-adenosylmethionine (SAM) enzymes, into 5-deoxyribose and adenine. The polypeptide is 5'-methylthioadenosine/S-adenosylhomocysteine nucleosidase (Shewanella halifaxensis (strain HAW-EB4)).